The chain runs to 282 residues: ATP synthase subunit a (282 aa).

6 helical membrane-spanning segments follow: residues 38–58 (VDSM…LWLA), 97–117 (FVAP…AMDM), 145–165 (VVPT…LLLC), 187–207 (FGSH…EFVA), 225–247 (LIFI…GHIV), and 261–281 (TLQA…AHEG).

It belongs to the ATPase A chain family. F-type ATPases have 2 components, CF(1) - the catalytic core - and CF(0) - the membrane proton channel. CF(1) has five subunits: alpha(3), beta(3), gamma(1), delta(1), epsilon(1). CF(0) has three main subunits: a(1), b(2) and c(9-12). The alpha and beta chains form an alternating ring which encloses part of the gamma chain. CF(1) is attached to CF(0) by a central stalk formed by the gamma and epsilon chains, while a peripheral stalk is formed by the delta and b chains.

It localises to the cell inner membrane. Key component of the proton channel; it plays a direct role in the translocation of protons across the membrane. The protein is ATP synthase subunit a of Azoarcus sp. (strain BH72).